Consider the following 331-residue polypeptide: Ornithine carbamoyltransferase (331 aa).

Carbamoyl phosphate contacts are provided by residues 57-60, Gln-82, Arg-106, and 133-136; these read STRT and HPTQ. Residues Asn-166, Asp-230, and 234–235 each bind L-ornithine; that span reads SM. Carbamoyl phosphate is bound by residues 272–273 and Arg-317; that span reads CL.

The protein belongs to the aspartate/ornithine carbamoyltransferase superfamily. OTCase family.

It localises to the cytoplasm. The enzyme catalyses carbamoyl phosphate + L-ornithine = L-citrulline + phosphate + H(+). It functions in the pathway amino-acid degradation; L-arginine degradation via ADI pathway; carbamoyl phosphate from L-arginine: step 2/2. Its function is as follows. Reversibly catalyzes the transfer of the carbamoyl group from carbamoyl phosphate (CP) to the N(epsilon) atom of ornithine (ORN) to produce L-citrulline. The protein is Ornithine carbamoyltransferase of Clostridium perfringens (strain SM101 / Type A).